A 189-amino-acid polypeptide reads, in one-letter code: Putative L,D-transpeptidase in ATP synthase subunits region ORF 5 (189 aa).

The segment at residues 1 to 35 is a signal peptide (tat-type signal); sequence MTDTLNRRAAMALGLASAAGAALATPALSQDAAPA. One can recognise a L,D-TPase catalytic domain in the interval 59-189; the sequence is PMLVADTFSR…CPVGTRVRVI (131 aa). Catalysis depends on His149, which acts as the Proton donor/acceptor. Cys165 acts as the Nucleophile in catalysis.

It belongs to the YkuD family. Post-translationally, predicted to be exported by the Tat system. The position of the signal peptide cleavage has not been experimentally proven.

It functions in the pathway cell wall biogenesis; peptidoglycan biosynthesis. This is Putative L,D-transpeptidase in ATP synthase subunits region ORF 5 from Fuscovulum blasticum (Rhodobacter blasticus).